A 762-amino-acid chain; its full sequence is MASNERDAISWYQKKIGAYDQQIWEKSIEQTQIKGFKNKPKKMGHIKADLIDVDLIRGSTFAKAKPEIPWTSLTRKGLVRVVFFPLFSSWWIQVTSLRIFVWLLLLYLMQVIALVLYFMMPIVNVSEVLGPLCLMLLMGTVHCQIVSTQITRPSGNNGNRRRRKLRKTVNGDGSRENGNNSSDKARGVETLESAPLNGSFWRTLFGNRMKRVKLICNRGTETDYDSGCLHPIIKKRQCRPEIRMWQTREKAKFSDGEKGRRESFRRLGNGISDDLSSDDDGEAQTQMMILRRSVEGASSDNGCEIKSRKSILSRHLNTQVKKTTSKWCSVVRDSDSLAESEFESAAFSQGSRSGMSGGSRSLNMLRRDSESTRHDSETEDMLWDDLLHGPECRSSVTSDSEGAHVSSLHSGTKRDPKEDVFQQNHLFWLQNSSPASDRVSAIIWEGNECKKMDMSVLEISGIIMSRVNAYQQGVGYQMLGNIVTIGLAFFPFLHRLFREKNLDQLKSISAEEILTLFCGAPPVTPIIILSIINFFERLCLTWMFFFMMCVAERTYKQRFLFAKLFSHITSARKARKYEIPHFRLKKVENIKIWLSLRSFLKRRGPQRSVDVVVSSVFLLTLSIAFICCAQVLRGHKTFLNDAYNWEFLIWESALLLFLLRLASLGSETNKKYSNVSILLTEQINLYLKMEKKPNKKEQLTLVNNVLKLSTKLLKELDTPFRLYGLTMNPLIYNITRVVILSAVSGVISDLLGFNIRLWKIKS.

The PHTF domain maps to 6–150 (RDAISWYQKK…VHCQIVSTQI (145 aa)). The next 3 membrane-spanning stretches (helical) occupy residues 77 to 97 (GLVR…VTSL), 99 to 119 (IFVW…LYFM), and 121 to 141 (PIVN…MGTV). Residues 152–188 (RPSGNNGNRRRRKLRKTVNGDGSRENGNNSSDKARGV) are disordered. N179, N180, and N197 each carry an N-linked (GlcNAc...) asparagine glycan. Phosphoserine occurs at positions 272, 276, 277, 334, and 336. 2 disordered regions span residues 344–379 (SAAF…SETE) and 393–415 (RSSV…TKRD). Residues 348–361 (SQGSRSGMSGGSRS) show a composition bias toward low complexity. A compositionally biased stretch (basic and acidic residues) spans 365-376 (LRRDSESTRHDS). N-linked (GlcNAc...) asparagine glycosylation is present at N431. 4 helical membrane passes run 473-493 (GVGY…FPFL), 512-532 (EILT…LSII), 611-631 (VVVS…CAQV), and 645-665 (WEFL…ASLG). N-linked (GlcNAc...) asparagine glycosylation is found at N674 and N733. The chain crosses the membrane as a helical span at residues 737–757 (VVILSAVSGVISDLLGFNIRL).

Interacts with FEM1B.

It is found in the endoplasmic reticulum membrane. Its subcellular location is the golgi apparatus. The protein resides in the cis-Golgi network membrane. The polypeptide is Protein PHTF1 (PHTF1) (Bos taurus (Bovine)).